A 541-amino-acid chain; its full sequence is ATP synthase subunit alpha (541 aa).

Residue 173–180 coordinates ATP; that stretch reads GDRQTGKT. The segment covering 517–527 has biased composition (basic and acidic residues); that stretch reads GIEPGVEEHES. Residues 517–541 form a disordered region; that stretch reads GIEPGVEEHESLGATAVNQETIVKK. Over residues 532-541 the composition is skewed to polar residues; it reads AVNQETIVKK.

The protein belongs to the ATPase alpha/beta chains family. As to quaternary structure, F-type ATPases have 2 components, CF(1) - the catalytic core - and CF(0) - the membrane proton channel. CF(1) has five subunits: alpha(3), beta(3), gamma(1), delta(1), epsilon(1). CF(0) has three main subunits: a(1), b(2) and c(9-12). The alpha and beta chains form an alternating ring which encloses part of the gamma chain. CF(1) is attached to CF(0) by a central stalk formed by the gamma and epsilon chains, while a peripheral stalk is formed by the delta and b chains.

Its subcellular location is the cell membrane. It catalyses the reaction ATP + H2O + 4 H(+)(in) = ADP + phosphate + 5 H(+)(out). Its function is as follows. Produces ATP from ADP in the presence of a proton gradient across the membrane. The alpha chain is a regulatory subunit. The protein is ATP synthase subunit alpha of Kocuria rhizophila (strain ATCC 9341 / DSM 348 / NBRC 103217 / DC2201).